A 439-amino-acid polypeptide reads, in one-letter code: Dolichyl-diphosphooligosaccharide--protein glycosyltransferase 48 kDa subunit (439 aa).

A signal peptide spans 1 to 26 (MATRAARVWSGWWLLLLPLLGLAGAS). Over 27-409 (GPRTLVLLDN…QYERFIPSAY (383 aa)) the chain is Lumenal. The chain crosses the membrane as a helical span at residues 410–430 (PYYASAFSMMLGLFIFSVVFL). The Cytoplasmic portion of the chain corresponds to 431-439 (HMKEKEKSD).

This sequence belongs to the DDOST 48 kDa subunit family. As to quaternary structure, component of the oligosaccharyltransferase (OST) complex. OST exists in two different complex forms which contain common core subunits RPN1, RPN2, OST48, OST4, DAD1 and TMEM258, either STT3A or STT3B as catalytic subunits, and form-specific accessory subunits. STT3A complex assembly occurs through the formation of 3 subcomplexes. Subcomplex 1 contains RPN1 and TMEM258, subcomplex 2 contains the STT3A-specific subunits STT3A, DC2/OSTC, and KCP2 as well as the core subunit OST4, and subcomplex 3 contains RPN2, DAD1, and OST48. The STT3A complex can form stable complexes with the Sec61 complex or with both the Sec61 and TRAP complexes. Interacts with SMIM22.

The protein localises to the endoplasmic reticulum membrane. It functions in the pathway protein modification; protein glycosylation. Its function is as follows. Subunit of the oligosaccharyl transferase (OST) complex that catalyzes the initial transfer of a defined glycan (Glc(3)Man(9)GlcNAc(2) in eukaryotes) from the lipid carrier dolichol-pyrophosphate to an asparagine residue within an Asn-X-Ser/Thr consensus motif in nascent polypeptide chains, the first step in protein N-glycosylation. N-glycosylation occurs cotranslationally and the complex associates with the Sec61 complex at the channel-forming translocon complex that mediates protein translocation across the endoplasmic reticulum (ER). All subunits are required for a maximal enzyme activity. Required for the assembly of both SST3A- and SS3B-containing OST complexes. This Bos taurus (Bovine) protein is Dolichyl-diphosphooligosaccharide--protein glycosyltransferase 48 kDa subunit.